Consider the following 159-residue polypeptide: ATP synthase subunit b 2 (159 aa).

A helical membrane pass occupies residues 1–21 (MDATFWAFIALVIFVAIVVYM).

It belongs to the ATPase B chain family. F-type ATPases have 2 components, F(1) - the catalytic core - and F(0) - the membrane proton channel. F(1) has five subunits: alpha(3), beta(3), gamma(1), delta(1), epsilon(1). F(0) has three main subunits: a(1), b(2) and c(10-14). The alpha and beta chains form an alternating ring which encloses part of the gamma chain. F(1) is attached to F(0) by a central stalk formed by the gamma and epsilon chains, while a peripheral stalk is formed by the delta and b chains.

It localises to the cell inner membrane. F(1)F(0) ATP synthase produces ATP from ADP in the presence of a proton or sodium gradient. F-type ATPases consist of two structural domains, F(1) containing the extramembraneous catalytic core and F(0) containing the membrane proton channel, linked together by a central stalk and a peripheral stalk. During catalysis, ATP synthesis in the catalytic domain of F(1) is coupled via a rotary mechanism of the central stalk subunits to proton translocation. In terms of biological role, component of the F(0) channel, it forms part of the peripheral stalk, linking F(1) to F(0). The chain is ATP synthase subunit b 2 from Brucella ovis (strain ATCC 25840 / 63/290 / NCTC 10512).